A 2493-amino-acid polypeptide reads, in one-letter code: Non-reducing polyketide synthase pkiA (2493 aa).

The tract at residues 129–243 (PLLMMTHFVQ…VQYDENRATI (115 aa)) is N-terminal acylcarrier protein transacylase domain (SAT). Catalysis depends on cysteine 160, which acts as the Nucleophile; for transacylase activity. Catalysis depends on histidine 274, which acts as the Proton donor/acceptor; for transacylase activity. A Ketosynthase family 3 (KS3) domain is found at 401–818 (ETDIAIVGMA…GSNASMVITQ (418 aa)). Residues cysteine 567, histidine 702, and histidine 741 each act as for beta-ketoacyl synthase activity in the active site. The tract at residues 926–1261 (CFGGQVGRSI…EYAPLLLPPY (336 aa)) is malonyl-CoA:ACP transacylase (MAT). Residues 1259-1387 (PPYQFERTRH…AHISMHDVRC (129 aa)) are N-terminal hotdog fold. Residues 1259–1562 (PPYQFERTRH…YSRVAKSLFT (304 aa)) enclose the PKS/mFAS DH domain. Histidine 1291 functions as the Proton acceptor; for dehydratase activity in the catalytic mechanism. Residues 1297–1558 (APIAPATLLL…LGLRYSRVAK (262 aa)) are product template (PT) domain. The tract at residues 1415–1562 (VDDILQGRNV…YSRVAKSLFT (148 aa)) is C-terminal hotdog fold. The active-site Proton donor; for dehydratase activity is the aspartate 1471. Residues 1588–1662 (KDLVSRVKAV…DLVQAVQSAL (75 aa)) form the Carrier domain. Serine 1622 bears the O-(pantetheine 4'-phosphoryl)serine mark. Residues 1822 to 2063 (REYPEYGGAS…YGHVDWTDGE (242 aa)) are methyltransferase (CMeT) domain. Positions 2128–2366 (VTGATGSLGS…TPVDVAARII (239 aa)) are NADPH-binding domain.

Pantetheine 4'-phosphate serves as cofactor.

It carries out the reaction decanoyl-[ACP] + 4 malonyl-CoA + AH2 + S-adenosyl-L-methionine + 3 H(+) = 2,4-dihydroxy-3-methyl-6-(2-oxoundecyl)benzaldehyde + holo-[ACP] + A + S-adenosyl-L-homocysteine + 4 CO2 + 4 CoA + H2O. The protein operates within secondary metabolite biosynthesis. Functionally, non-reducing polyketide synthase; part of the pki gene cluster that mediates the biosynthesis of 2,4-dihydroxy-3-methyl-6-(2-oxoundecyl)benzaldehyde. The first step in the pathway is the generation of the decanoyl starter unit by the FAS composed of subunits pkiB and pkiC, which is then transferred directly from the FAS to the SAT domain of the non-reducing polyketide synthase pkiA. PkiA condenses the decanoyyl starter unit with 4 malonyl-CoA units and performs one methylation step to yield 2,4-dihydroxy-3-methyl-6-(2-oxoundecyl)benzaldehyde. This Emericella nidulans (strain FGSC A4 / ATCC 38163 / CBS 112.46 / NRRL 194 / M139) (Aspergillus nidulans) protein is Non-reducing polyketide synthase pkiA.